The sequence spans 252 residues: MAQSRSLLLSIAVNALLVGVLLYSVAVNRTQEGSLQLSAVRGKIAAPRTSFQNAVSRVSRNQLPSSSRKAVAQAFLSNPDMVPDMGKRKLMNNLVLAAVAPVVASAGGCYLYYFYPPQTGGGGGAVGALDALGNPVSAESWFKSHKKNARDLVQGIKGDPTYLIVNDDGSTLNSYGLNAICTHLGCVVPWDAASNKFKCPCHGSQYAPDGHVVRGPAPRPLQLAHVEDDNGKILLSPWTETDFRTGEKPWWA.

The helical transmembrane segment at 94–114 threads the bilayer; that stretch reads LVLAAVAPVVASAGGCYLYYF. The region spanning 141–235 is the Rieske domain; it reads WFKSHKKNAR…VEDDNGKILL (95 aa). Positions 181, 183, 199, and 202 each coordinate [2Fe-2S] cluster. Cys-186 and Cys-201 are disulfide-bonded.

Belongs to the Rieske iron-sulfur protein family. As to quaternary structure, the 4 large subunits of the cytochrome b6-f complex are cytochrome b6, subunit IV (17 kDa polypeptide, petD), cytochrome f and the Rieske protein, while the 4 small subunits are petG, petL, petM and petN. The complex functions as a dimer. [2Fe-2S] cluster serves as cofactor.

It localises to the plastid. The protein resides in the chloroplast thylakoid membrane. It carries out the reaction 2 oxidized [plastocyanin] + a plastoquinol + 2 H(+)(in) = 2 reduced [plastocyanin] + a plastoquinone + 4 H(+)(out). Functionally, component of the cytochrome b6-f complex, which mediates electron transfer between photosystem II (PSII) and photosystem I (PSI), cyclic electron flow around PSI, and state transitions. This chain is Cytochrome b6-f complex iron-sulfur subunit, chloroplastic (petC), found in Bigelowiella natans (Pedinomonas minutissima).